We begin with the raw amino-acid sequence, 632 residues long: DNA topoisomerase 4 subunit B (632 aa).

ATP is bound by residues Tyr5, Asn42, Asp69, 110–116 (GLHGVGI), and Lys334. Residues 412-525 (TELFLVEGDS…DGHVYVAMPP (114 aa)) form the Toprim domain. The Mg(2+) site is built by Glu418, Asp490, and Asp492.

It belongs to the type II topoisomerase family. ParE type 1 subfamily. Heterotetramer composed of ParC and ParE. Mg(2+) serves as cofactor. It depends on Mn(2+) as a cofactor. Ca(2+) is required as a cofactor.

The enzyme catalyses ATP-dependent breakage, passage and rejoining of double-stranded DNA.. Its function is as follows. Topoisomerase IV is essential for chromosome segregation. It relaxes supercoiled DNA. Performs the decatenation events required during the replication of a circular DNA molecule. This Haemophilus influenzae (strain ATCC 51907 / DSM 11121 / KW20 / Rd) protein is DNA topoisomerase 4 subunit B.